We begin with the raw amino-acid sequence, 431 residues long: Adenylosuccinate synthetase (431 aa).

Residues 13–19 (GDEGKGK) and 41–43 (GHT) each bind GTP. D14 functions as the Proton acceptor in the catalytic mechanism. Mg(2+) contacts are provided by D14 and G41. Residues 14-17 (DEGK), 39-42 (NAGH), T130, R144, Q225, T240, and R304 each bind IMP. The active-site Proton donor is the H42. Residue 300 to 306 (ATTGRER) participates in substrate binding. GTP-binding positions include R306, 332–334 (KLD), and 415–417 (STG).

Belongs to the adenylosuccinate synthetase family. As to quaternary structure, homodimer. The cofactor is Mg(2+).

The protein localises to the cytoplasm. It carries out the reaction IMP + L-aspartate + GTP = N(6)-(1,2-dicarboxyethyl)-AMP + GDP + phosphate + 2 H(+). The protein operates within purine metabolism; AMP biosynthesis via de novo pathway; AMP from IMP: step 1/2. Its function is as follows. Plays an important role in the de novo pathway of purine nucleotide biosynthesis. Catalyzes the first committed step in the biosynthesis of AMP from IMP. The polypeptide is Adenylosuccinate synthetase (Colwellia psychrerythraea (strain 34H / ATCC BAA-681) (Vibrio psychroerythus)).